A 143-amino-acid chain; its full sequence is Transcriptional regulator MraZ (143 aa).

SpoVT-AbrB domains follow at residues 5–47 and 76–119; these read EYQH…PLNE and ATEC…SDER.

It belongs to the MraZ family. In terms of assembly, forms oligomers.

The protein resides in the cytoplasm. It localises to the nucleoid. This is Transcriptional regulator MraZ from Enterococcus faecalis (strain ATCC 700802 / V583).